The primary structure comprises 398 residues: S-adenosylmethionine synthase (398 aa).

Residue H17 coordinates ATP. Residue D19 participates in Mg(2+) binding. Residue E45 coordinates K(+). Positions 58 and 101 each coordinate L-methionine. Residues 101–111 (QSPDIAQGVDK) are flexible loop. ATP-binding positions include 176–178 (DGK), 243–244 (RF), D252, 258–259 (RK), and K279. Residue D252 coordinates L-methionine. K283 provides a ligand contact to L-methionine.

It belongs to the AdoMet synthase family. As to quaternary structure, homotetramer; dimer of dimers. Requires Mg(2+) as cofactor. It depends on K(+) as a cofactor.

It is found in the cytoplasm. The enzyme catalyses L-methionine + ATP + H2O = S-adenosyl-L-methionine + phosphate + diphosphate. Its pathway is amino-acid biosynthesis; S-adenosyl-L-methionine biosynthesis; S-adenosyl-L-methionine from L-methionine: step 1/1. Catalyzes the formation of S-adenosylmethionine (AdoMet) from methionine and ATP. The overall synthetic reaction is composed of two sequential steps, AdoMet formation and the subsequent tripolyphosphate hydrolysis which occurs prior to release of AdoMet from the enzyme. The sequence is that of S-adenosylmethionine synthase from Staphylococcus haemolyticus (strain JCSC1435).